We begin with the raw amino-acid sequence, 417 residues long: Serine hydroxymethyltransferase (417 aa).

Residues L121 and G125–L127 each bind (6S)-5,6,7,8-tetrahydrofolate. N6-(pyridoxal phosphate)lysine is present on K229. A (6S)-5,6,7,8-tetrahydrofolate-binding site is contributed by S355 to F357.

The protein belongs to the SHMT family. In terms of assembly, homodimer. Pyridoxal 5'-phosphate is required as a cofactor.

The protein localises to the cytoplasm. The enzyme catalyses (6R)-5,10-methylene-5,6,7,8-tetrahydrofolate + glycine + H2O = (6S)-5,6,7,8-tetrahydrofolate + L-serine. It participates in one-carbon metabolism; tetrahydrofolate interconversion. It functions in the pathway amino-acid biosynthesis; glycine biosynthesis; glycine from L-serine: step 1/1. In terms of biological role, catalyzes the reversible interconversion of serine and glycine with tetrahydrofolate (THF) serving as the one-carbon carrier. This reaction serves as the major source of one-carbon groups required for the biosynthesis of purines, thymidylate, methionine, and other important biomolecules. Also exhibits THF-independent aldolase activity toward beta-hydroxyamino acids, producing glycine and aldehydes, via a retro-aldol mechanism. The protein is Serine hydroxymethyltransferase of Enterobacter sp. (strain 638).